We begin with the raw amino-acid sequence, 251 residues long: 4-hydroxy-tetrahydrodipicolinate reductase (251 aa).

Residues 9-14, 85-87, and 109-112 contribute to the NAD(+) site; these read GCNGKM, ATT, and SANM. The active-site Proton donor/acceptor is the His-141. His-142 is a binding site for (S)-2,3,4,5-tetrahydrodipicolinate. Catalysis depends on Lys-145, which acts as the Proton donor. 151-152 contacts (S)-2,3,4,5-tetrahydrodipicolinate; that stretch reads GT.

Belongs to the DapB family.

Its subcellular location is the cytoplasm. The enzyme catalyses (S)-2,3,4,5-tetrahydrodipicolinate + NAD(+) + H2O = (2S,4S)-4-hydroxy-2,3,4,5-tetrahydrodipicolinate + NADH + H(+). It carries out the reaction (S)-2,3,4,5-tetrahydrodipicolinate + NADP(+) + H2O = (2S,4S)-4-hydroxy-2,3,4,5-tetrahydrodipicolinate + NADPH + H(+). Its pathway is amino-acid biosynthesis; L-lysine biosynthesis via DAP pathway; (S)-tetrahydrodipicolinate from L-aspartate: step 4/4. Functionally, catalyzes the conversion of 4-hydroxy-tetrahydrodipicolinate (HTPA) to tetrahydrodipicolinate. This Caldanaerobacter subterraneus subsp. tengcongensis (strain DSM 15242 / JCM 11007 / NBRC 100824 / MB4) (Thermoanaerobacter tengcongensis) protein is 4-hydroxy-tetrahydrodipicolinate reductase.